The following is a 1347-amino-acid chain: Ubinuclein-2 (1347 aa).

The segment at 1 to 134 (MAEPRRVAFI…ETVRLELVLK (134 aa)) is disordered. Ser13 bears the Phosphoserine mark. Composition is skewed to basic and acidic residues over residues 16 to 37 (RRREAEYPGPEREPEYPREPPR) and 67 to 79 (SREKPLPQREVSR). Positions 93-110 (PEPPPPFPPLPLQPPPPR) are enriched in pro residues. Over residues 122 to 134 (PPRETVRLELVLK) the composition is skewed to basic and acidic residues. At Thr243 the chain carries Phosphothreonine. Phosphoserine is present on Ser250. The interval 250–301 (SDTEEDDITDNQKHKPPKVPKIKEDDIEMKKRKRKEEGEKEKKPRKKVPKQL) is disordered. Position 252 is a phosphothreonine (Thr252). Lys272 is covalently cross-linked (Glycyl lysine isopeptide (Lys-Gly) (interchain with G-Cter in SUMO2)). Ser311, Ser416, Ser419, Ser422, and Ser584 each carry phosphoserine. Disordered stretches follow at residues 573–597 (LQTDEEREKNGSEEDDDEKPGKRVI), 707–740 (ECSPKKDQKTPTSLVASVSGPPTSSSTAAIAAAS), 815–849 (LATPKKLDSTQTTHSSSLIAGHTGPVPKKPQDLAH), 880–913 (GLQRSSQIHTSSSSQTHVSSSSQAQIAASSHALG), 981–1006 (RLPLSTPSPGNGSQGSHPLVSRTVPS), and 1035–1218 (ASPK…SSVV). A compositionally biased stretch (basic and acidic residues) spans 574 to 584 (QTDEEREKNGS). The segment covering 721-740 (VASVSGPPTSSSTAAIAAAS) has biased composition (low complexity). Over residues 823–832 (STQTTHSSSL) the composition is skewed to polar residues. The span at 880–911 (GLQRSSQIHTSSSSQTHVSSSSQAQIAASSHA) shows a compositional bias: low complexity. Residues 985–996 (STPSPGNGSQGS) are compositionally biased toward polar residues. Over residues 1035–1045 (ASPKLAASPKP) the composition is skewed to low complexity. The segment covering 1046-1060 (ATSPKPLPSPKPSAS) has biased composition (pro residues). 2 stretches are compositionally biased toward low complexity: residues 1061 to 1070 (PKPSLSAKPS) and 1077 to 1095 (SKSNPTPKPTVSPSSSSPN). N6-acetyllysine is present on Lys1068. 2 stretches are compositionally biased toward polar residues: residues 1101–1164 (GSHS…NSLS) and 1174–1185 (RGSNLNSSGANR). Phosphoserine is present on Ser1123. Lys1148 bears the N6-acetyllysine mark.

Belongs to the ubinuclein family. In terms of tissue distribution, expressed in several cell lines tested, including primary and transformed cell lines.

The protein is Ubinuclein-2 (UBN2) of Homo sapiens (Human).